The primary structure comprises 320 residues: Transaldolase (320 aa).

Lys-126 (schiff-base intermediate with substrate) is an active-site residue.

Belongs to the transaldolase family. Type 1 subfamily. Homodimer.

The protein localises to the cytoplasm. It carries out the reaction D-sedoheptulose 7-phosphate + D-glyceraldehyde 3-phosphate = D-erythrose 4-phosphate + beta-D-fructose 6-phosphate. It functions in the pathway carbohydrate degradation; pentose phosphate pathway; D-glyceraldehyde 3-phosphate and beta-D-fructose 6-phosphate from D-ribose 5-phosphate and D-xylulose 5-phosphate (non-oxidative stage): step 2/3. Its function is as follows. Transaldolase is important for the balance of metabolites in the pentose-phosphate pathway. This chain is Transaldolase, found in Bordetella bronchiseptica (strain ATCC BAA-588 / NCTC 13252 / RB50) (Alcaligenes bronchisepticus).